Here is a 111-residue protein sequence, read N- to C-terminus: Phosphoribosyl-ATP pyrophosphatase (111 aa).

This sequence belongs to the PRA-PH family.

The protein resides in the cytoplasm. The catalysed reaction is 1-(5-phospho-beta-D-ribosyl)-ATP + H2O = 1-(5-phospho-beta-D-ribosyl)-5'-AMP + diphosphate + H(+). Its pathway is amino-acid biosynthesis; L-histidine biosynthesis; L-histidine from 5-phospho-alpha-D-ribose 1-diphosphate: step 2/9. This is Phosphoribosyl-ATP pyrophosphatase from Alcanivorax borkumensis (strain ATCC 700651 / DSM 11573 / NCIMB 13689 / SK2).